A 341-amino-acid polypeptide reads, in one-letter code: Protein CbhE (341 aa).

Acidic residues predominate over residues 287–297; that stretch reads IDEENTSDSSE. The disordered stretch occupies residues 287–341; the sequence is IDEENTSDSSEEGTSKNRFRDTLFSNVPDSSSDSENEQEREKKELAGKTPSFRLC. Basic and acidic residues predominate over residues 323-332; the sequence is EQEREKKELA.

The protein resides in the cytoplasm. Its function is as follows. May be involved in the pathogenesis of acute Q fever. The polypeptide is Protein CbhE (cbhE) (Coxiella burnetii (strain RSA 493 / Nine Mile phase I)).